Here is a 300-residue protein sequence, read N- to C-terminus: Iron/alpha-ketoglutarate-dependent dioxygenase okaE (300 aa).

Histidine 134, aspartate 136, and histidine 210 together coordinate Fe cation.

It belongs to the PhyH family. Homodimer. Fe cation serves as cofactor.

The catalysed reaction is okaramine A + 2-oxoglutarate + AH2 + O2 = 12-deshydroxyl okaramine E + succinate + A + CO2 + H2O. It catalyses the reaction 12-deshydroxyl okaramine E + 2-oxoglutarate + O2 = okaramine E + succinate + CO2. The enzyme catalyses okaramine A + 2-oxoglutarate + O2 = okaramine E + succinate + CO2. The protein operates within alkaloid biosynthesis. It functions in the pathway secondary metabolite biosynthesis; terpenoid biosynthesis. Iron/alpha-ketoglutarate-dependent dioxygenase; part of the gene cluster that mediates the biosynthesis of okaramine B, a prenylated indole alkaloid that possesses an unusual octacyclic ring system, including a four-membered azetidine ring and an eight-membered azocine ring, and that exhibits insecticidal activity against silkworm larvae. Within the pathway, okaE forms the unusual 2-dimethyl-3-methyl-azetidine ring to yield 12-deshydroxyl okaramine E from okaramine A. OkaE also catalyzes the hydroxylation of 12-deshydroxyl okaramine E to produce okaramine E. The biosynthesis begins with the NRPS okaA that condenses two tryptophan molecules into cyclo(L-Trp-L-Trp). Prenylation by the prenyltransferase okaC then leads to the formation of cyclo(N8-(alpha,alpha-dimethylallyl)-L-Trp-6a-(alpha,alpha-dime-thylallyl)-L-Trp). This is followed by indole 2,3-epoxidation by the FAD-dependent monooxygenase okaB to facilitate the formation of the hexahydropyrrolo[2,3-b]indole (HPI) moiety of okaramine C. The cytochrome P450 monooxygenase okaD then likely catalyzes formation of the eight-membered ring of okaramine A. The dioxygenase okaE further forms the unusual 2-dimethyl-3-methyl-azetidine ring to yield 12-deshydroxyl okaramine E, as well as the hydroxylation of 12-deshydroxyl okaramine E to produce okaramine E. The cytochrome P450 monoxygenase okaG converts 12-deshydroxyl okaramine E into 3-desmethyl okaramine B which is further methylated by the methyltransferase okaF into okaramine B. In a shunt pathway, okaG and okaF together are also able to convert okaramine E into okaramine D. Okaramine H is produced by nonenzymatic conversion from okaramine A. This is Iron/alpha-ketoglutarate-dependent dioxygenase okaE from Penicillium ochrochloron.